A 254-amino-acid polypeptide reads, in one-letter code: 5-oxoprolinase subunit A (254 aa).

This sequence belongs to the LamB/PxpA family. Forms a complex composed of PxpA, PxpB and PxpC.

It catalyses the reaction 5-oxo-L-proline + ATP + 2 H2O = L-glutamate + ADP + phosphate + H(+). Its function is as follows. Catalyzes the cleavage of 5-oxoproline to form L-glutamate coupled to the hydrolysis of ATP to ADP and inorganic phosphate. The protein is 5-oxoprolinase subunit A of Burkholderia orbicola (strain MC0-3).